The following is a 574-amino-acid chain: Proline--tRNA ligase (574 aa).

It belongs to the class-II aminoacyl-tRNA synthetase family. ProS type 1 subfamily. As to quaternary structure, homodimer.

It localises to the cytoplasm. The catalysed reaction is tRNA(Pro) + L-proline + ATP = L-prolyl-tRNA(Pro) + AMP + diphosphate. Functionally, catalyzes the attachment of proline to tRNA(Pro) in a two-step reaction: proline is first activated by ATP to form Pro-AMP and then transferred to the acceptor end of tRNA(Pro). As ProRS can inadvertently accommodate and process non-cognate amino acids such as alanine and cysteine, to avoid such errors it has two additional distinct editing activities against alanine. One activity is designated as 'pretransfer' editing and involves the tRNA(Pro)-independent hydrolysis of activated Ala-AMP. The other activity is designated 'posttransfer' editing and involves deacylation of mischarged Ala-tRNA(Pro). The misacylated Cys-tRNA(Pro) is not edited by ProRS. This Anaeromyxobacter sp. (strain K) protein is Proline--tRNA ligase.